A 389-amino-acid chain; its full sequence is Lipid-A-disaccharide synthase (389 aa).

Belongs to the LpxB family.

The catalysed reaction is a lipid X + a UDP-2-N,3-O-bis[(3R)-3-hydroxyacyl]-alpha-D-glucosamine = a lipid A disaccharide + UDP + H(+). The protein operates within bacterial outer membrane biogenesis; LPS lipid A biosynthesis. In terms of biological role, condensation of UDP-2,3-diacylglucosamine and 2,3-diacylglucosamine-1-phosphate to form lipid A disaccharide, a precursor of lipid A, a phosphorylated glycolipid that anchors the lipopolysaccharide to the outer membrane of the cell. The polypeptide is Lipid-A-disaccharide synthase (Burkholderia ambifaria (strain ATCC BAA-244 / DSM 16087 / CCUG 44356 / LMG 19182 / AMMD) (Burkholderia cepacia (strain AMMD))).